Reading from the N-terminus, the 444-residue chain is MPMFQPSKNGGFDGHILDLHSAVKDGVLGGGDGKFLVVVTDEKKKLDLKEMISELELPEIPSVFICPISLEPMQDPVTLCTGQTYERSNILKWFNIGHCTCPTTMQELWDDLVTPNKTLHQLIYTWFSQKYVLMKKRSEDVQGRAIEILGTLRKAKGKAKVHALSELKQVVMAHAIAKKTVVDEGGVFVISSLLSPFTSHAVGSEAIAILVNLELDSDSKAGLMQPARVSLMVDMLNDGSIETKINCARLIGRLVEEKGFRAELVSSHSLLVGLMRLVKDRRRRNGVSPALTLLKSVSVHKQVRNLLVRIGAVPQLVDVLPCLDVECLESALFVLDSLCLESEGRIALKDSVNTIPHTVRLLMKVSEKCTNYAISILWSVCKLASEECSSLAVEVGLAAKLLLVIQSGCDPALKQRSAELLKLCSLHYSDSMFISKCKLTRTIQ.

Residues glutamate 59 to leucine 133 form the U-box domain. 2 ARM repeats span residues lysine 301–leucine 340 and glutamate 343–lysine 382.

It catalyses the reaction S-ubiquitinyl-[E2 ubiquitin-conjugating enzyme]-L-cysteine + [acceptor protein]-L-lysine = [E2 ubiquitin-conjugating enzyme]-L-cysteine + N(6)-ubiquitinyl-[acceptor protein]-L-lysine.. The protein operates within protein modification; protein ubiquitination. In terms of biological role, functions as an E3 ubiquitin ligase. This chain is U-box domain-containing protein 31 (PUB31), found in Arabidopsis thaliana (Mouse-ear cress).